We begin with the raw amino-acid sequence, 183 residues long: Isopentenyl-diphosphate Delta-isomerase (183 aa).

2 residues coordinate Mn(2+): H26 and H33. The Nudix hydrolase domain maps to 31–169; that stretch reads PLHFAFSCYV…PFAFSPWMVE (139 aa). The active site involves C68. C68 contributes to the Mg(2+) binding site. Residue H70 coordinates Mn(2+). E88 serves as a coordination point for Mg(2+). Residues E118 and E120 each contribute to the Mn(2+) site. E120 is a catalytic residue.

This sequence belongs to the IPP isomerase type 1 family. Requires Mg(2+) as cofactor. The cofactor is Mn(2+).

Its subcellular location is the cytoplasm. The enzyme catalyses isopentenyl diphosphate = dimethylallyl diphosphate. It functions in the pathway isoprenoid biosynthesis; dimethylallyl diphosphate biosynthesis; dimethylallyl diphosphate from isopentenyl diphosphate: step 1/1. In terms of biological role, catalyzes the 1,3-allylic rearrangement of the homoallylic substrate isopentenyl (IPP) to its highly electrophilic allylic isomer, dimethylallyl diphosphate (DMAPP). This chain is Isopentenyl-diphosphate Delta-isomerase, found in Corynebacterium diphtheriae (strain ATCC 700971 / NCTC 13129 / Biotype gravis).